The following is a 1193-amino-acid chain: Nucleolar protein 6 (1193 aa).

Disordered regions lie at residues 1 to 69 (MRFV…TKNV) and 1137 to 1193 (KREQ…KVLK). Basic and acidic residues-rich tracts occupy residues 31 to 46 (AGDH…KIAK) and 1151 to 1161 (DANKAEEESKP). Ser35 carries the post-translational modification Phosphoserine. Residues 1162-1184 (KPKKHRQRKGTGKKALPKRKRLI) are compositionally biased toward basic residues.

It belongs to the NRAP family. Part of the small subunit (SSU) processome, composed of more than 70 proteins and the RNA chaperone small nucleolar RNA (snoRNA) U3. In terms of tissue distribution, expressed in nurse cells at stages 9-10 of oogenesis and exported to the oocyte.

The protein resides in the nucleus. It localises to the nucleolus. Its subcellular location is the chromosome. In terms of biological role, part of the small subunit (SSU) processome, first precursor of the small eukaryotic ribosomal subunit. During the assembly of the SSU processome in the nucleolus, many ribosome biogenesis factors, an RNA chaperone and ribosomal proteins associate with the nascent pre-rRNA and work in concert to generate RNA folding, modifications, rearrangements and cleavage as well as targeted degradation of pre-ribosomal RNA by the RNA exosome. The chain is Nucleolar protein 6 from Drosophila melanogaster (Fruit fly).